The sequence spans 637 residues: SCF-associated factor 1 (637 aa).

In terms of domain architecture, F-box spans 14–63; that stretch reads GLSPDIVQATLPFLSSDDIKNLSQTNKYYNTLLDFDHSKILWHELFHKAF. Ser-16 bears the Phosphoserine mark. The RCC1 1 repeat unit spans residues 109–202; it reads AKFYSWGYLK…GFSFQILTES (94 aa). The tract at residues 242 to 315 is disordered; it reads YPRITSRSNG…RTTMPSMGPH (74 aa). Residues 244-260 show a composition bias toward polar residues; sequence RITSRSNGSTVNTTGTF. Ser-266 is modified (phosphoserine). Residues 289–305 are compositionally biased toward low complexity; sequence SGGAPAASPGGSHSGVP. Residues 565–635 form an RCC1 2 repeat; that stretch reads GHLYSWGIES…GWQTGALIIK (71 aa).

Interacts with AAH1, SKP1 and CDC53. Component of the SCF(SAF1) complex containing CDC53, SKP1, HRT1 and SAF1.

Its pathway is protein modification; protein ubiquitination. Its function is as follows. Substrate recognition component of a SCF (SKP1-CUL1-F-box protein) E3 ubiquitin-protein ligase complex which mediates the ubiquitination and subsequent proteasomal degradation of target proteins. Targets AAH1 adenine deaminase for proteasome-dependent degradation upon entry into quiescence. Targets also URA7. The polypeptide is SCF-associated factor 1 (SAF1) (Saccharomyces cerevisiae (strain ATCC 204508 / S288c) (Baker's yeast)).